The primary structure comprises 500 residues: Cytochrome P450 71B26 (500 aa).

A helical membrane pass occupies residues 1–21 (MDSIWILSLLFFIIFLLLAAF). Cysteine 440 provides a ligand contact to heme.

This sequence belongs to the cytochrome P450 family. Requires heme as cofactor.

The protein resides in the membrane. The polypeptide is Cytochrome P450 71B26 (CYP71B26) (Arabidopsis thaliana (Mouse-ear cress)).